The following is a 102-amino-acid chain: Noncompact myelin-associated protein (102 aa).

Residues 1-30 are Extracellular-facing; that stretch reads MTTATPLGDTTFFSLNMTTRGEDFLYKSSG. A helical transmembrane segment spans residues 31-51; it reads AIVAAVVVVVIIIFTVVLILL. Residues 52–102 lie on the Cytoplasmic side of the membrane; it reads KMYNRKMRTRRELEPKGPKPTAPSAVGPNSNGSQHPATVTFSPVDVQVETR. A disordered region spans residues 60–102; it reads TRRELEPKGPKPTAPSAVGPNSNGSQHPATVTFSPVDVQVETR. Residues 78-92 show a composition bias toward polar residues; that stretch reads GPNSNGSQHPATVTF.

In terms of processing, glycosylated.

It is found in the cell membrane. In terms of biological role, plays a role in myelin formation. The chain is Noncompact myelin-associated protein (NCMAP) from Homo sapiens (Human).